A 110-amino-acid polypeptide reads, in one-letter code: Tyrosine-protein phosphatase 3 (110 aa).

In terms of domain architecture, Tyrosine-protein phosphatase spans 1-110 (QKCATIVMVT…NPPHSGPIVV (110 aa)). Substrate is bound at residue Asp80.

This sequence belongs to the protein-tyrosine phosphatase family.

The catalysed reaction is O-phospho-L-tyrosyl-[protein] + H2O = L-tyrosyl-[protein] + phosphate. This Styela plicata (Wrinkled sea squirt) protein is Tyrosine-protein phosphatase 3 (STY-3).